The primary structure comprises 600 residues: Elongation factor 4 (600 aa).

Positions 5–187 (SRIRNFSIIA…DLIKKIPPPK (183 aa)) constitute a tr-type G domain. Residues 17–22 (DHGKST) and 134–137 (NKMD) each bind GTP.

This sequence belongs to the TRAFAC class translation factor GTPase superfamily. Classic translation factor GTPase family. LepA subfamily.

It is found in the cell inner membrane. It carries out the reaction GTP + H2O = GDP + phosphate + H(+). In terms of biological role, required for accurate and efficient protein synthesis under certain stress conditions. May act as a fidelity factor of the translation reaction, by catalyzing a one-codon backward translocation of tRNAs on improperly translocated ribosomes. Back-translocation proceeds from a post-translocation (POST) complex to a pre-translocation (PRE) complex, thus giving elongation factor G a second chance to translocate the tRNAs correctly. Binds to ribosomes in a GTP-dependent manner. This chain is Elongation factor 4, found in Marinobacter nauticus (strain ATCC 700491 / DSM 11845 / VT8) (Marinobacter aquaeolei).